The primary structure comprises 357 residues: Snake venom metalloproteinase H4 (357 aa).

A signal peptide spans 1–6; sequence FPYQGS. Residues 7-176 constitute a propeptide that is removed on maturation; the sequence is SIMLESGKVN…KKASQLIVST (170 aa). Residues 180 to 357 enclose the Peptidase M12B domain; the sequence is RYMEIVIVVD…EVIKYFLDSK (178 aa). H316 contributes to the Zn(2+) binding site. The active site involves E317. Residues H320 and H326 each contribute to the Zn(2+) site. An intrachain disulfide couples C333 to C339.

This sequence belongs to the venom metalloproteinase (M12B) family. P-I subfamily. As to quaternary structure, monomer. Requires Zn(2+) as cofactor. As to expression, expressed by the venom gland.

Its subcellular location is the secreted. In terms of biological role, snake venom metalloproteinase that impairs hemostasis in the envenomed animal. The protein is Snake venom metalloproteinase H4 of Deinagkistrodon acutus (Hundred-pace snake).